Here is a 475-residue protein sequence, read N- to C-terminus: 3-keto-steroid reductase ERG27 (475 aa).

NADP(+) contacts are provided by I32, I55, T59, and K65. Active-site proton donor residues include S249 and Y272. NADP(+)-binding residues include Y272, K276, V324, and S326. Catalysis depends on K276, which acts as the Lowers pKa of active site Tyr.

Belongs to the short-chain dehydrogenases/reductases (SDR) family. ERG27 subfamily. Heterotetramer of ERG25, ERG26, ERG27 and ERG28. ERG28 acts as a scaffold to tether ERG27 and other 4,4-demethylation-related enzymes, forming a demethylation enzyme complex, in the endoplasmic reticulum.

The protein localises to the endoplasmic reticulum membrane. The protein resides in the lipid droplet. It functions in the pathway steroid metabolism; ergosterol biosynthesis. Functionally, 3-keto-steroid reductase; part of the third module of ergosterol biosynthesis pathway that includes the late steps of the pathway. ERG27 is a catalytic component of the C-4 demethylation complex that catalyzes the conversion of 4,4-dimethylfecosterol into fecosterol via 4-methylfecosterol. The third module or late pathway involves the ergosterol synthesis itself through consecutive reactions that mainly occur in the endoplasmic reticulum (ER) membrane. Firstly, the squalene synthase ERG9 catalyzes the condensation of 2 farnesyl pyrophosphate moieties to form squalene, which is the precursor of all steroids. Squalene synthase is crucial for balancing the incorporation of farnesyl diphosphate (FPP) into sterol and nonsterol isoprene synthesis. Secondly, squalene is converted into lanosterol by the consecutive action of the squalene epoxidase ERG1 and the lanosterol synthase ERG7. Then, the delta(24)-sterol C-methyltransferase ERG6 methylates lanosterol at C-24 to produce eburicol. Eburicol is the substrate of the sterol 14-alpha demethylase encoded by CYP51A, CYP51B and CYP51C, to yield 4,4,24-trimethyl ergosta-8,14,24(28)-trienol. CYP51B encodes the enzyme primarily responsible for sterol 14-alpha-demethylation, and plays an essential role in ascospore formation. CYP51A encodes an additional sterol 14-alpha-demethylase, induced on ergosterol depletion and responsible for the intrinsic variation in azole sensitivity. The third CYP51 isoform, CYP51C, does not encode a sterol 14-alpha-demethylase, but is required for full virulence on host wheat ears. The C-14 reductase ERG24 then reduces the C14=C15 double bond which leads to 4,4-dimethylfecosterol. A sequence of further demethylations at C-4, involving the C-4 demethylation complex containing the C-4 methylsterol oxidases ERG25, the sterol-4-alpha-carboxylate 3-dehydrogenase ERG26 and the 3-keto-steroid reductase ERG27, leads to the production of fecosterol via 4-methylfecosterol. ERG28 has a role as a scaffold to help anchor ERG25, ERG26 and ERG27 to the endoplasmic reticulum. The C-8 sterol isomerase ERG2 then catalyzes the reaction which results in unsaturation at C-7 in the B ring of sterols and thus converts fecosterol to episterol. The sterol-C5-desaturases ERG3A and ERG3BB then catalyze the introduction of a C-5 double bond in the B ring to produce 5-dehydroepisterol. The C-22 sterol desaturases ERG5A and ERG5B further convert 5-dehydroepisterol into ergosta-5,7,22,24(28)-tetraen-3beta-ol by forming the C-22(23) double bond in the sterol side chain. Finally, ergosta-5,7,22,24(28)-tetraen-3beta-ol is substrate of the C-24(28) sterol reductase ERG4 to produce ergosterol. This chain is 3-keto-steroid reductase ERG27, found in Gibberella zeae (strain ATCC MYA-4620 / CBS 123657 / FGSC 9075 / NRRL 31084 / PH-1) (Wheat head blight fungus).